A 328-amino-acid polypeptide reads, in one-letter code: Basic leucine zipper (bZIP) transcription factor atfB (328 aa).

The interval 1-39 (MLPEQSAFGRSAMPGSDAVNPGPSPFAPPPNSFSGDFLG) is disordered. Over residues 22 to 31 (GPSPFAPPPN) the composition is skewed to pro residues. Residues 163-202 (KAKREKFLERNRLAASKCRQKKKEHTQLLESRYREQSDKK) form a basic motif region. Positions 163-226 (KAKREKFLER…LGLKNEVLKH (64 aa)) constitute a bZIP domain. Residues 205–219 (LVSEIARLRSEILGL) form a leucine-zipper region. The disordered stretch occupies residues 250–313 (TTAPDLTDVP…SEASVLTENS (64 aa)). A compositionally biased stretch (polar residues) spans 262–277 (ASSSEGPMTPRPQQAL). Positions 283 to 305 (DPLHLEPSRADGSTDHSVRRDSE) are enriched in basic and acidic residues.

Belongs to the bZIP family. ATF subfamily.

The protein localises to the nucleus. Functionally, transcription factor that acts as a key player in the regulatory circuit that integrates secondary metabolism and cellular response to oxidative stress. Regulates the genes involved in development, as well as osmotic, oxidative, and cell wall stresses. Participates in the caspofungin paradoxical effect (CPE), where fungi grow beyond the minimum inhibitory concentration of caspofungin. Plays a role in virulence. The chain is Basic leucine zipper (bZIP) transcription factor atfB from Aspergillus fumigatus (strain ATCC MYA-4609 / CBS 101355 / FGSC A1100 / Af293) (Neosartorya fumigata).